A 210-amino-acid polypeptide reads, in one-letter code: Probable septum site-determining protein MinC (210 aa).

The protein belongs to the MinC family. In terms of assembly, interacts with MinD and FtsZ.

Functionally, cell division inhibitor that blocks the formation of polar Z ring septums. Rapidly oscillates between the poles of the cell to destabilize FtsZ filaments that have formed before they mature into polar Z rings. Prevents FtsZ polymerization. The sequence is that of Probable septum site-determining protein MinC from Thermotoga petrophila (strain ATCC BAA-488 / DSM 13995 / JCM 10881 / RKU-1).